Here is a 967-residue protein sequence, read N- to C-terminus: Dolichyl-phosphooligosaccharide-protein glycotransferase 1 (967 aa).

The Cytoplasmic segment spans residues 1–21 (MVKTQIKEKKKDEKVTIPLPG). Residues 22 to 42 (KIKTVLAFLVVLAFAAYGFYI) form a helical membrane-spanning segment. Topologically, residues 43–112 (RHLTAGKYFS…ISIFGYNELE (70 aa)) are extracellular. The short motif at 53–55 (DPD) is the DXD motif 1 element. Asp-55 contacts Mn(2+). A helical transmembrane segment spans residues 113–133 (AFLLWPPFVGFLSVIGVYLLG). The Cytoplasmic segment spans residues 134–135 (RK). Residues 136–156 (VLNEWAGMWGAIILSVLTANF) form a helical membrane-spanning segment. Over 157-165 (SRTFSGNAR) the chain is Extracellular. The Mn(2+) site is built by Arg-165 and Asp-167. Positions 165–167 (RGD) match the DXD motif 2 motif. Residues 166-186 (GDGPFMMLFTFSAVLMLYYLT) traverse the membrane as a helical segment. Residues 187–193 (EENKNKK) are Cytoplasmic-facing. A helical membrane pass occupies residues 194-214 (IIWGTLFVLLAGISTAAWNGS). Residue Pro-215 is a topological domain, extracellular. The helical transmembrane segment at 216-236 (FGLMVLLGFASFQTIILFIFG) threads the bilayer. Over 237 to 247 (KINELREFIKE) the chain is Cytoplasmic. A helical transmembrane segment spans residues 248-268 (YYPAYLGILAISYLLTIPGIG). A topological domain (extracellular) is located at residue Lys-269. Residues 270–290 (IGGFVRFAFEVFLGLVFLAIV) traverse the membrane as a helical segment. The Cytoplasmic portion of the chain corresponds to 291 to 306 (MLYGGKYLNYSDKKHR). Residues 307–327 (FAVVAVIVIAGFAGAYIYVGP) traverse the membrane as a helical segment. The Extracellular portion of the chain corresponds to 328–360 (KLFTLMGGAYQSTQVYETVQELAKTDWGDVKVY). The TIXE motif signature appears at 345 to 348 (TVQE). A helical transmembrane segment spans residues 361–381 (YGVEKPNGIVFFLGLVGAMIV). The Cytoplasmic segment spans residues 382–396 (TARYLYKLFKDGRRP). The chain crosses the membrane as a helical span at residues 397-417 (HEELFAITFYVMSIYLLWTAA). A topological domain (extracellular) is located at residue Arg-418. Arg-418 provides a ligand contact to a glycophospholipid. The helical transmembrane segment at 419–439 (FLFLASYAIALMSGVFAGYVL) threads the bilayer. Residues 440–453 (ETVEKMKESIPIKA) lie on the Cytoplasmic side of the membrane. A helical transmembrane segment spans residues 454 to 474 (ALGGVIAIMLLLIPLTHGPLL). Over 475 to 967 (AQSAKSMRTT…LEVSASAPHH (493 aa)) the chain is Extracellular. Residues 511 to 513 (WWD) form an interacts with target acceptor peptide in protein substrate region. The short motif at 511–515 (WWDYG) is the WWDYG motif element. Tyr-516 provides a ligand contact to a glycophospholipid. The DK motif motif lies at 571-578 (DWAKFNAI).

Belongs to the STT3 family. It depends on Mn(2+) as a cofactor. Mg(2+) is required as a cofactor.

Its subcellular location is the cell membrane. It carries out the reaction an archaeal dolichyl phosphooligosaccharide + [protein]-L-asparagine = an archaeal dolichyl phosphate + a glycoprotein with the oligosaccharide chain attached by N-beta-D-glycosyl linkage to a protein L-asparagine.. The protein operates within protein modification; protein glycosylation. In terms of biological role, oligosaccharyl transferase (OST) that catalyzes the initial transfer of a defined glycan (ManNAcXyl(2)GlcAMan(2)GalNAc in P.furiosus) from the lipid carrier dolichol-monophosphate to an asparagine residue within an Asn-X-Ser/Thr consensus motif in nascent polypeptide chains, the first step in protein N-glycosylation. The chain is Dolichyl-phosphooligosaccharide-protein glycotransferase 1 (aglB1) from Pyrococcus furiosus (strain ATCC 43587 / DSM 3638 / JCM 8422 / Vc1).